The following is a 186-amino-acid chain: Small ribosomal subunit protein uS5 (186 aa).

One can recognise an S5 DRBM domain in the interval 18–81 (FVDKLVHINR…EAAKRAMIRV (64 aa)).

Belongs to the universal ribosomal protein uS5 family. Part of the 30S ribosomal subunit. Contacts proteins S4 and S8.

Functionally, with S4 and S12 plays an important role in translational accuracy. Located at the back of the 30S subunit body where it stabilizes the conformation of the head with respect to the body. In Parvibaculum lavamentivorans (strain DS-1 / DSM 13023 / NCIMB 13966), this protein is Small ribosomal subunit protein uS5.